Here is a 150-residue protein sequence, read N- to C-terminus: Cell division protein SepF (150 aa).

The protein belongs to the SepF family. As to quaternary structure, homodimer. Interacts with FtsZ.

It is found in the cytoplasm. Cell division protein that is part of the divisome complex and is recruited early to the Z-ring. Probably stimulates Z-ring formation, perhaps through the cross-linking of FtsZ protofilaments. Its function overlaps with FtsA. This chain is Cell division protein SepF, found in Clostridium botulinum (strain ATCC 19397 / Type A).